The following is a 561-amino-acid chain: Asparagine synthetase [glutamine-hydrolyzing] (561 aa).

Cys2 functions as the For GATase activity in the catalytic mechanism. The Glutamine amidotransferase type-2 domain occupies 2–191; sequence CGIWALFGSD…PGHYEVLDLK (190 aa). L-glutamine is bound by residues 49-53, 75-77, and Asp97; these read RLAVV and NGE. Residues 213–536 form the Asparagine synthetase domain; sequence HAACDTVGNL…PGRSSWLPHY (324 aa). ATP-binding positions include Leu256, Ile288, and 363–364; that span reads SG.

It catalyses the reaction L-aspartate + L-glutamine + ATP + H2O = L-asparagine + L-glutamate + AMP + diphosphate + H(+). It participates in amino-acid biosynthesis; L-asparagine biosynthesis; L-asparagine from L-aspartate (L-Gln route): step 1/1. This is Asparagine synthetase [glutamine-hydrolyzing] (ASNS) from Gallus gallus (Chicken).